The sequence spans 203 residues: UPF0637 protein SERP0693 (203 aa).

This sequence belongs to the UPF0637 family.

The sequence is that of UPF0637 protein SERP0693 from Staphylococcus epidermidis (strain ATCC 35984 / DSM 28319 / BCRC 17069 / CCUG 31568 / BM 3577 / RP62A).